The sequence spans 468 residues: Argininosuccinate synthase (468 aa).

ATP contacts are provided by residues 10–18 (AYSGGLDTS) and alanine 37. Residues tyrosine 90 and serine 95 each coordinate L-citrulline. Glycine 120 provides a ligand contact to ATP. Positions 122, 126, and 127 each coordinate L-aspartate. Residue asparagine 126 participates in L-citrulline binding. The L-citrulline site is built by arginine 130, serine 182, serine 191, glutamate 267, and tyrosine 279. Residues 445-457 (PVAAKATAKPVKA) show a composition bias toward low complexity. The interval 445–468 (PVAAKATAKPVKAPVKKPIAKKKG) is disordered. Positions 458-468 (PVKKPIAKKKG) are enriched in basic residues.

Belongs to the argininosuccinate synthase family. Type 1 subfamily. As to quaternary structure, homotetramer.

The protein resides in the cytoplasm. It carries out the reaction L-citrulline + L-aspartate + ATP = 2-(N(omega)-L-arginino)succinate + AMP + diphosphate + H(+). The protein operates within amino-acid biosynthesis; L-arginine biosynthesis; L-arginine from L-ornithine and carbamoyl phosphate: step 2/3. This is Argininosuccinate synthase from Dechloromonas aromatica (strain RCB).